A 964-amino-acid polypeptide reads, in one-letter code: Chaperone protein ClpB4, mitochondrial (964 aa).

The N-terminal 39 residues, 1–39 (MALRRLSKSVSSAIKAQYTLSRPSPLLRSRSLSSSPHYT), are a transit peptide targeting the mitochondrion. Residues 83–227 (VNQNEFTEMA…KDAIKDVRGD (145 aa)) form the Clp R domain. Repeat regions lie at residues 88-153 (FTEM…ISKQ) and 164-227 (LGSS…VRGD). Positions 242-490 (LEKYGNDLTE…KLKMEITSKP (249 aa)) are i. ATP is bound by residues 287–294 (GEPGVGKT) and 690–697 (GPTGVGKT). Residues 616–807 (VTDLDIAEIV…VVIMTSNIGS (192 aa)) are II.

Belongs to the ClpA/ClpB family.

It localises to the mitochondrion. Molecular chaperone that does not seem to be involved in heat stress response or tolerance. This Arabidopsis thaliana (Mouse-ear cress) protein is Chaperone protein ClpB4, mitochondrial (CLPB4).